The sequence spans 209 residues: High frequency lysogenization protein HflD homolog (209 aa).

The stretch at 95-132 (LERKLAASKGAMNTLGNRIADLSRQLEHFELESDTLMS) forms a coiled coil.

It belongs to the HflD family.

Its subcellular location is the cytoplasm. The protein localises to the cell inner membrane. This Cronobacter sakazakii (strain ATCC BAA-894) (Enterobacter sakazakii) protein is High frequency lysogenization protein HflD homolog.